The primary structure comprises 181 residues: Ribosome-recycling factor (181 aa).

Positions R131 to N154 are disordered.

This sequence belongs to the RRF family.

It is found in the cytoplasm. Its function is as follows. Responsible for the release of ribosomes from messenger RNA at the termination of protein biosynthesis. May increase the efficiency of translation by recycling ribosomes from one round of translation to another. This is Ribosome-recycling factor from Leuconostoc citreum (strain KM20).